A 58-amino-acid polypeptide reads, in one-letter code: Small ribosomal subunit protein bS21 (58 aa).

A disordered region spans residues 27–58 (GVLSEARKHEHYEKPSVKRKKKSEAARKRKFK). Over residues 31-42 (EARKHEHYEKPS) the composition is skewed to basic and acidic residues. Basic residues predominate over residues 43–58 (VKRKKKSEAARKRKFK).

This sequence belongs to the bacterial ribosomal protein bS21 family.

In Desulfitobacterium hafniense (strain DSM 10664 / DCB-2), this protein is Small ribosomal subunit protein bS21.